The chain runs to 377 residues: Glutamate 5-kinase (377 aa).

Residue K20 participates in ATP binding. Residues S60, D147, and N159 each contribute to the substrate site. 179 to 180 (TD) serves as a coordination point for ATP. Positions 285–363 (AGRLVIDDGA…DKVYQVLGEA (79 aa)) constitute a PUA domain.

This sequence belongs to the glutamate 5-kinase family.

The protein resides in the cytoplasm. It carries out the reaction L-glutamate + ATP = L-glutamyl 5-phosphate + ADP. It functions in the pathway amino-acid biosynthesis; L-proline biosynthesis; L-glutamate 5-semialdehyde from L-glutamate: step 1/2. In terms of biological role, catalyzes the transfer of a phosphate group to glutamate to form L-glutamate 5-phosphate. This chain is Glutamate 5-kinase, found in Acinetobacter baumannii (strain AB307-0294).